A 392-amino-acid polypeptide reads, in one-letter code: Phosphoglycerate kinase (392 aa).

Substrate contacts are provided by residues 21 to 23, arginine 36, 59 to 62, arginine 113, and arginine 146; these read DLN and HLGR. Residues lysine 197, glutamate 319, and 345 to 348 each bind ATP; that span reads GGDT.

It belongs to the phosphoglycerate kinase family. Monomer.

The protein localises to the cytoplasm. It carries out the reaction (2R)-3-phosphoglycerate + ATP = (2R)-3-phospho-glyceroyl phosphate + ADP. It participates in carbohydrate degradation; glycolysis; pyruvate from D-glyceraldehyde 3-phosphate: step 2/5. In Alkalilimnicola ehrlichii (strain ATCC BAA-1101 / DSM 17681 / MLHE-1), this protein is Phosphoglycerate kinase.